Reading from the N-terminus, the 339-residue chain is MIKIAAAGGGTGGHLYPLLAILETLAKRVDVKVLFFAVKGKIDERVVRKDHPEFETVSIDVRGLLRPLHHPKNLWRTLKIGIATIEVKKHLKRFKPDLVVLTGGYISGVVGLAAKDLGIPIFVHEQNVVPGLAVKVLSQYAKKVFVSFERTRNYLREWQDKIVVTGCPVRETEKEAPLKDFVLVLGGSLGSEAINELMEKVYPELQETQFVHSTGSDDWTKRLSAFPNVTALTYIDPMGAYWKKAIASISRAGASTIAEMMYYGVPGILIPWESSAESHQLENALEAERLGYGIVIRENEASPRKIIESIDKVVKKGKIEKMKENPASKISEEILGEIM.

Residues 11-13 (TGG), Asn-127, Arg-170, Ser-188, Ile-235, and Gln-280 contribute to the UDP-N-acetyl-alpha-D-glucosamine site.

Belongs to the glycosyltransferase 28 family. MurG subfamily.

The protein localises to the cell inner membrane. The catalysed reaction is di-trans,octa-cis-undecaprenyl diphospho-N-acetyl-alpha-D-muramoyl-L-alanyl-D-glutamyl-meso-2,6-diaminopimeloyl-D-alanyl-D-alanine + UDP-N-acetyl-alpha-D-glucosamine = di-trans,octa-cis-undecaprenyl diphospho-[N-acetyl-alpha-D-glucosaminyl-(1-&gt;4)]-N-acetyl-alpha-D-muramoyl-L-alanyl-D-glutamyl-meso-2,6-diaminopimeloyl-D-alanyl-D-alanine + UDP + H(+). Its pathway is cell wall biogenesis; peptidoglycan biosynthesis. Cell wall formation. Catalyzes the transfer of a GlcNAc subunit on undecaprenyl-pyrophosphoryl-MurNAc-pentapeptide (lipid intermediate I) to form undecaprenyl-pyrophosphoryl-MurNAc-(pentapeptide)GlcNAc (lipid intermediate II). The protein is UDP-N-acetylglucosamine--N-acetylmuramyl-(pentapeptide) pyrophosphoryl-undecaprenol N-acetylglucosamine transferase of Thermotoga sp. (strain RQ2).